Consider the following 481-residue polypeptide: F-box/LRR-repeat protein At3g03360 (481 aa).

The tract at residues 1–28 (MEKESQENSTRPDASSTVFSSSKSTCAS) is disordered. A compositionally biased stretch (low complexity) spans 14 to 28 (ASSTVFSSSKSTCAS). Residues 36–84 (GDLISRLPDDILQLILSYLPTRLAIKTSVLSRRWRHVWSDTWSLSFHRD) form the F-box domain. LRR repeat units lie at residues 118 to 145 (SRPD…SLYL), 196 to 221 (HCNI…LLFF), 295 to 320 (EADF…TLGA), 350 to 375 (ISRY…TIHP), and 413 to 439 (RRNV…ELIV).

The chain is F-box/LRR-repeat protein At3g03360 from Arabidopsis thaliana (Mouse-ear cress).